Here is a 533-residue protein sequence, read N- to C-terminus: Probable DNA ligase (533 aa).

Glu211 contacts ATP. The N6-AMP-lysine intermediate role is filled by Lys213. ATP-binding residues include Arg218, Arg233, Glu262, Phe302, Arg374, and Lys380. The interval 512–533 (LAGEAAEKGQAEGGGEELEDDG) is disordered.

It belongs to the ATP-dependent DNA ligase family. Requires Mg(2+) as cofactor.

The enzyme catalyses ATP + (deoxyribonucleotide)n-3'-hydroxyl + 5'-phospho-(deoxyribonucleotide)m = (deoxyribonucleotide)n+m + AMP + diphosphate.. Functionally, DNA ligase that seals nicks in double-stranded DNA during DNA replication, DNA recombination and DNA repair. This is Probable DNA ligase from Sorangium cellulosum (strain So ce56) (Polyangium cellulosum (strain So ce56)).